A 588-amino-acid polypeptide reads, in one-letter code: Proline--tRNA ligase (588 aa).

The protein belongs to the class-II aminoacyl-tRNA synthetase family. ProS type 1 subfamily. In terms of assembly, homodimer.

The protein localises to the cytoplasm. It catalyses the reaction tRNA(Pro) + L-proline + ATP = L-prolyl-tRNA(Pro) + AMP + diphosphate. Functionally, catalyzes the attachment of proline to tRNA(Pro) in a two-step reaction: proline is first activated by ATP to form Pro-AMP and then transferred to the acceptor end of tRNA(Pro). As ProRS can inadvertently accommodate and process non-cognate amino acids such as alanine and cysteine, to avoid such errors it has two additional distinct editing activities against alanine. One activity is designated as 'pretransfer' editing and involves the tRNA(Pro)-independent hydrolysis of activated Ala-AMP. The other activity is designated 'posttransfer' editing and involves deacylation of mischarged Ala-tRNA(Pro). The misacylated Cys-tRNA(Pro) is not edited by ProRS. In Corynebacterium efficiens (strain DSM 44549 / YS-314 / AJ 12310 / JCM 11189 / NBRC 100395), this protein is Proline--tRNA ligase.